The chain runs to 309 residues: Small ribosomal subunit protein uS7m (309 aa).

Residues 39–86 (DSTTSSRLPPRVQIQQQQQQRTQPYSTETTPPPNSNNGDLAGIEGQPP) form a disordered region. A compositionally biased stretch (low complexity) spans 51–61 (QIQQQQQQRTQ).

The protein belongs to the universal ribosomal protein uS7 family. In terms of assembly, component of the mitochondrial small ribosomal subunit (mt-SSU). Mature N.crassa 74S mitochondrial ribosomes consist of a small (37S) and a large (54S) subunit. The 37S small subunit contains a 16S ribosomal RNA (16S mt-rRNA) and 32 different proteins. The 54S large subunit contains a 23S rRNA (23S mt-rRNA) and 42 different proteins.

The protein localises to the mitochondrion. Component of the mitochondrial ribosome (mitoribosome), a dedicated translation machinery responsible for the synthesis of mitochondrial genome-encoded proteins, including at least some of the essential transmembrane subunits of the mitochondrial respiratory chain. The mitoribosomes are attached to the mitochondrial inner membrane and translation products are cotranslationally integrated into the membrane. This chain is Small ribosomal subunit protein uS7m (rsm7), found in Neurospora crassa (strain ATCC 24698 / 74-OR23-1A / CBS 708.71 / DSM 1257 / FGSC 987).